We begin with the raw amino-acid sequence, 183 residues long: Ankyrin repeat domain-containing protein 39 (183 aa).

4 ANK repeats span residues 30-59, 63-92, 96-125, and 129-158; these read DFER…DPSQ, AGYT…KCDA, GGAT…NPRV, and DGMT…ALKA. Ser-153 carries the phosphoserine modification.

It belongs to the ANKRD39 family.

In Homo sapiens (Human), this protein is Ankyrin repeat domain-containing protein 39 (ANKRD39).